The primary structure comprises 198 residues: Twist-related protein 1 (198 aa).

The segment covering 1-18 (MMQDVSSSPVSPADDSLS) has biased composition (low complexity). The tract at residues 1–101 (MMQDVSSSPV…GGGSPQSYEE (101 aa)) is disordered. Residues 34–43 (RGGRKRRSSR) are compositionally biased toward basic residues. Gly residues-rich tracts occupy residues 46–64 (AGGG…GGDE) and 79–95 (GCGG…GGGS). Positions 104–155 (TQRVMANVRERQRTQSLNEAFAALRKIIPTLPSDKLSKIQTLKLAARYIDFL) constitute a bHLH domain. Positions 157–187 (QVLQSDELDSKMASCSYVAHERLSYAFSVWR) are sufficient for transactivation activity.

Efficient DNA binding requires dimerization with another bHLH protein. Homodimer or heterodimer with E proteins such as TCF3. ID1 binds preferentially to TCF3 but does not interact efficiently with TWIST1 so ID1 levels control the amount of TCF3 available to dimerize with TWIST and thus determine the type of dimer formed.

It is found in the nucleus. In terms of biological role, acts as a transcriptional regulator. Inhibits myogenesis by sequestrating E proteins, inhibiting trans-activation by MEF2, and inhibiting DNA-binding by MYOD1 through physical interaction. This interaction probably involves the basic domains of both proteins. Also represses expression of pro-inflammatory cytokines such as TNFA and IL1B. Regulates cranial suture patterning and fusion. Activates transcription as a heterodimer with E proteins. Regulates gene expression differentially, depending on dimer composition. Homodimers induce expression of FGFR2 and POSTN while heterodimers repress FGFR2 and POSTN expression and induce THBS1 expression. Heterodimerization is also required for osteoblast differentiation. Represses the activity of the circadian transcriptional activator: NPAS2-BMAL1 heterodimer. This Eulemur fulvus fulvus (Brown lemur) protein is Twist-related protein 1 (TWIST1).